The sequence spans 386 residues: Lipoyl synthase, mitochondrial (386 aa).

[4Fe-4S] cluster-binding residues include C115, C120, C126, C146, C150, C153, and S362. A Radical SAM core domain is found at 131–351 (ETGTATATIM…QKLGMEMGFR (221 aa)).

Belongs to the radical SAM superfamily. Lipoyl synthase family. It depends on [4Fe-4S] cluster as a cofactor.

The protein resides in the mitochondrion. It catalyses the reaction [[Fe-S] cluster scaffold protein carrying a second [4Fe-4S](2+) cluster] + N(6)-octanoyl-L-lysyl-[protein] + 2 oxidized [2Fe-2S]-[ferredoxin] + 2 S-adenosyl-L-methionine + 4 H(+) = [[Fe-S] cluster scaffold protein] + N(6)-[(R)-dihydrolipoyl]-L-lysyl-[protein] + 4 Fe(3+) + 2 hydrogen sulfide + 2 5'-deoxyadenosine + 2 L-methionine + 2 reduced [2Fe-2S]-[ferredoxin]. The protein operates within protein modification; protein lipoylation via endogenous pathway; protein N(6)-(lipoyl)lysine from octanoyl-[acyl-carrier-protein]: step 2/2. Catalyzes the radical-mediated insertion of two sulfur atoms into the C-6 and C-8 positions of the octanoyl moiety bound to the lipoyl domains of lipoate-dependent enzymes, thereby converting the octanoylated domains into lipoylated derivatives. The chain is Lipoyl synthase, mitochondrial from Picea sitchensis (Sitka spruce).